The chain runs to 287 residues: MGLLQDYSQRREEGEGRGSNFTRFSCWSCDFCRCLCNAEIAGESGGKVCCCGGKGGGPDQHSETRSCDNSGSWGRYGLAAFAPCSSLRLPAYLHLHEIQKIVIIFYATKIMGRHLTVFIIALAAVFAACAEEKEMAKSLTVKSAFENGGKIPAKYTCDGEDISPPLYIEGLREDVKSLVIICEDPDAPMGVFTHWIAWNVEPTSEIPENVPKTKFVDEPKMVQGRNDFGKVGYNGPCPPSGEHRYYFRIYAIDTLLQGDYSRQELLRAIEGHILQYGEIYGLYSRSR.

This sequence belongs to the UPF0098 family.

This is UPF0098 protein AF_1698 from Archaeoglobus fulgidus (strain ATCC 49558 / DSM 4304 / JCM 9628 / NBRC 100126 / VC-16).